Consider the following 2890-residue polypeptide: Bifunctional DNA-directed RNA polymerase subunit beta-beta' (2890 aa).

A DNA-directed RNA polymerase subunit beta region spans residues 1–1377; the sequence is MSKKIPLKNR…DINIFGDDVD (1377 aa). The tract at residues 1384-2890 is DNA-directed RNA polymerase subunit beta'; the sequence is PIMIKEDDRP…LRALEDNSKF (1507 aa). Residues Cys1449, Cys1451, Cys1465, and Cys1468 each contribute to the Zn(2+) site. Residues Asp1849, Asp1851, and Asp1853 each contribute to the Mg(2+) site. 4 residues coordinate Zn(2+): Cys2179, Cys2253, Cys2260, and Cys2263.

In the N-terminal section; belongs to the RNA polymerase beta chain family. The protein in the C-terminal section; belongs to the RNA polymerase beta' chain family. As to quaternary structure, the RNAP catalytic core consists of 2 alpha, 1 beta/beta' and 1 omega subunit. When a sigma factor is associated with the core the holoenzyme is formed, which can initiate transcription. Mg(2+) serves as cofactor. It depends on Zn(2+) as a cofactor.

The enzyme catalyses RNA(n) + a ribonucleoside 5'-triphosphate = RNA(n+1) + diphosphate. Its function is as follows. DNA-dependent RNA polymerase catalyzes the transcription of DNA into RNA using the four ribonucleoside triphosphates as substrates. The chain is Bifunctional DNA-directed RNA polymerase subunit beta-beta' (rpoBC) from Helicobacter pylori (strain J99 / ATCC 700824) (Campylobacter pylori J99).